We begin with the raw amino-acid sequence, 382 residues long: 6-oxocyclohex-1-ene-1-carbonyl-CoA hydrolase (382 aa).

Belongs to the enoyl-CoA hydratase/isomerase family. As to quaternary structure, homohexamer.

It catalyses the reaction 6-oxocyclohex-1-ene-1-carbonyl-CoA + 2 H2O = 3-hydroxy-6-carboxyhexanoyl-CoA + H(+). Its pathway is aromatic compound metabolism; benzoyl-CoA degradation. Involved in the central benzoyl-CoA catabolism. Catalyzes the addition of one molecule of water to the double bond and the hydrolytic cleavage of C-C bond in the alicyclic ring, 6-oxocyclohex-1-ene-1-carbonyl-CoA (6-OCH-CoA) to yield 3-hydroxypimelyl-CoA. The protein is 6-oxocyclohex-1-ene-1-carbonyl-CoA hydrolase of Syntrophus aciditrophicus (strain SB).